We begin with the raw amino-acid sequence, 189 residues long: GTP cyclohydrolase 1 (189 aa).

Positions 78, 81, and 150 each coordinate Zn(2+).

The protein belongs to the GTP cyclohydrolase I family. In terms of assembly, homomer.

The catalysed reaction is GTP + H2O = 7,8-dihydroneopterin 3'-triphosphate + formate + H(+). It participates in cofactor biosynthesis; 7,8-dihydroneopterin triphosphate biosynthesis; 7,8-dihydroneopterin triphosphate from GTP: step 1/1. In Lysinibacillus sphaericus (strain C3-41), this protein is GTP cyclohydrolase 1.